The sequence spans 450 residues: Phosphoglucosamine mutase (450 aa).

Residue Ser102 is the Phosphoserine intermediate of the active site. Ser102, Asp244, Asp246, and Asp248 together coordinate Mg(2+). A Phosphoserine modification is found at Ser102.

Belongs to the phosphohexose mutase family. It depends on Mg(2+) as a cofactor. In terms of processing, activated by phosphorylation.

The catalysed reaction is alpha-D-glucosamine 1-phosphate = D-glucosamine 6-phosphate. Its function is as follows. Catalyzes the conversion of glucosamine-6-phosphate to glucosamine-1-phosphate. This Syntrophomonas wolfei subsp. wolfei (strain DSM 2245B / Goettingen) protein is Phosphoglucosamine mutase.